A 550-amino-acid polypeptide reads, in one-letter code: MPKEKYDPPDPRRIYTIMSAEEVANGKKSHWDELEISGRVRSLSTSLWTLTHLTVLHLSDNNLSRIPPDIAKLHNLVYLDLSSNKLRSLPAELGNVVSLRELLLNNNLLRVLPFELGRLFRLQTLGLKGNPLSQDILSLYQEPDGMRKLLNYMLDNLSVHPEQLPHRPWITLKERDQILPSVSFTVMCYNVLCDKYATRQLYGYCPSWALNWEYRKKGIMDEIISCDADIISLQEVETEQYFTLFMPALEERGYDGFFSPKSRAKIMSDQEKKHVDGCAIFFRTEKFSLVQKHTVEFNQIAMANSEGSEAMLNRVMTKDNIGVSVLLEVHKDFSGAGMKPHHSSEKQLLMVANAHMHWDPEYSDVKLIQTMMFVSELKSIIEKAACRPGSPTPDPNSIPFVLCADLNSLLDSGVVEYLTNGGVADNHKDFKELRYNECLTNFNCNGKNGTPDGRITHGFQLRSAYENNLMPYTNYTFDFKGVIDYIFYSKTHMDVLGILGPLDPQWMMDNNITGCPHPHIPSDHFSLLTQLELHPPLLPIINGVHLPSRR.

A required for interaction with cnot1, cnot3 and cnot7 region spans residues 1-148; that stretch reads MPKEKYDPPD…LYQEPDGMRK (148 aa). 4 LRR repeats span residues 52-73, 75-96, 98-120, and 121-143; these read HLTV…IAKL, NLVY…LGNV, SLRE…GRLF, and RLQT…YQEP. Residues 153–550 form a nuclease domain region; sequence MLDNLSVHPE…INGVHLPSRR (398 aa). A Mg(2+)-binding site is contributed by Glu235. Residues Glu235, Glu271, His355, and Pro360 each contribute to the substrate site. Asp405 is a Mg(2+) binding site. Asp405 functions as the Proton donor/acceptor in the catalytic mechanism. Substrate-binding residues include Asn407, Asn474, and Phe479.

It belongs to the CCR4/nocturin family. In terms of assembly, component of the CCR4-NOT complex. Requires Mg(2+) as cofactor.

It localises to the cytoplasm. The protein localises to the nucleus. The enzyme catalyses Exonucleolytic cleavage of poly(A) to 5'-AMP.. Its function is as follows. Poly(A) nuclease with 3'-5' RNase activity. Catalytic component of the CCR4-NOT complex which is one of the major cellular mRNA deadenylases and is linked to various cellular processes including bulk mRNA degradation, miRNA-mediated repression, translational repression during translational initiation and general transcription regulation. Additional complex functions may be a consequence of its influence on mRNA expression. This is CCR4-NOT transcription complex subunit 6-like-A (cnot6l-a) from Xenopus laevis (African clawed frog).